Reading from the N-terminus, the 473-residue chain is Cysteine--tRNA ligase (473 aa).

Cys-30 lines the Zn(2+) pocket. A 'HIGH' region motif is present at residues 32–42 (MTVYDYCHIGH). Residues Cys-213, His-238, and Glu-242 each coordinate Zn(2+). A 'KMSKS' region motif is present at residues 270-274 (KMSKS). Residue Lys-273 participates in ATP binding.

The protein belongs to the class-I aminoacyl-tRNA synthetase family. In terms of assembly, monomer. Zn(2+) is required as a cofactor.

Its subcellular location is the cytoplasm. It catalyses the reaction tRNA(Cys) + L-cysteine + ATP = L-cysteinyl-tRNA(Cys) + AMP + diphosphate. The polypeptide is Cysteine--tRNA ligase (Acinetobacter baumannii (strain ACICU)).